A 322-amino-acid chain; its full sequence is 4-hydroxythreonine-4-phosphate dehydrogenase (322 aa).

Thr132 provides a ligand contact to substrate. His160, His205, and His260 together coordinate a divalent metal cation. Substrate is bound by residues Lys268, Asn277, and Arg286.

Belongs to the PdxA family. In terms of assembly, homodimer. Zn(2+) serves as cofactor. Mg(2+) is required as a cofactor. Requires Co(2+) as cofactor.

The protein localises to the cytoplasm. The enzyme catalyses 4-(phosphooxy)-L-threonine + NAD(+) = 3-amino-2-oxopropyl phosphate + CO2 + NADH. It functions in the pathway cofactor biosynthesis; pyridoxine 5'-phosphate biosynthesis; pyridoxine 5'-phosphate from D-erythrose 4-phosphate: step 4/5. Catalyzes the NAD(P)-dependent oxidation of 4-(phosphooxy)-L-threonine (HTP) into 2-amino-3-oxo-4-(phosphooxy)butyric acid which spontaneously decarboxylates to form 3-amino-2-oxopropyl phosphate (AHAP). This Xanthomonas oryzae pv. oryzae (strain PXO99A) protein is 4-hydroxythreonine-4-phosphate dehydrogenase.